Here is a 589-residue protein sequence, read N- to C-terminus: UvrABC system protein C (589 aa).

Positions 14 to 91 constitute a GIY-YIG domain; sequence HKPGCYLWKD…IAKYKPKYNM (78 aa).

The protein belongs to the UvrC family. As to quaternary structure, interacts with UvrB in an incision complex.

Its subcellular location is the cytoplasm. Its function is as follows. The UvrABC repair system catalyzes the recognition and processing of DNA lesions. UvrC both incises the 5' and 3' sides of the lesion. The N-terminal half is responsible for the 3' incision and the C-terminal half is responsible for the 5' incision. This is UvrABC system protein C from Malacoplasma penetrans (strain HF-2) (Mycoplasma penetrans).